The chain runs to 388 residues: Beta-1,4-galactosyltransferase 5 (388 aa).

Residues Met-1–Ser-14 lie on the Cytoplasmic side of the membrane. Residues Leu-15–Ala-35 traverse the membrane as a helical; Signal-anchor for type II membrane protein segment. The Lumenal segment spans residues Pro-36–Tyr-388. 5 N-linked (GlcNAc...) asparagine glycosylation sites follow: Asn-77, Asn-81, Asn-90, Asn-111, and Asn-128. A disulfide bridge connects residues Cys-114 and Cys-158. Residues Pro-169–Arg-173, Phe-208–Arg-210, Val-235–Asp-236, Tyr-264, and Trp-296 contribute to the UDP-alpha-D-galactose site. Residues Cys-229 and Cys-248 are joined by a disulfide bond. Position 236 (Asp-236) interacts with Mn(2+). Gly-298–Asp-301 is an N-acetyl-D-glucosamine binding site. His-329 serves as a coordination point for Mn(2+). UDP-alpha-D-galactose is bound at residue His-329 to His-330. Arg-340 lines the N-acetyl-D-glucosamine pocket. N-linked (GlcNAc...) asparagine glycosylation is found at Asn-364 and Asn-373.

The protein belongs to the glycosyltransferase 7 family. Requires Mn(2+) as cofactor. As to expression, ubiquitously expressed.

Its subcellular location is the golgi apparatus. The protein localises to the golgi stack membrane. The catalysed reaction is a beta-D-glucosyl-(1&lt;-&gt;1')-N-acylsphing-4-enine + UDP-alpha-D-galactose = a beta-D-Gal-(1-&gt;4)-beta-D-Glc-(1&lt;-&gt;1)-Cer(d18:1(4E)) + UDP + H(+). Its pathway is protein modification; protein glycosylation. It functions in the pathway sphingolipid metabolism. In terms of biological role, catalyzes the synthesis of lactosylceramide (LacCer) via the transfer of galactose from UDP-galactose to glucosylceramide (GlcCer). LacCer is the starting point in the biosynthesis of all gangliosides (membrane-bound glycosphingolipids) which play pivotal roles in the CNS including neuronal maturation and axonal and myelin formation. Plays a role in the glycosylation of BMPR1A and regulation of its protein stability. Essential for extraembryonic development during early embryogenesis. In Homo sapiens (Human), this protein is Beta-1,4-galactosyltransferase 5.